The following is a 329-amino-acid chain: DNA-directed RNA polymerase subunit alpha (329 aa).

Residues 1 to 235 (MLGSVTDFLK…EQLDAFVDLR (235 aa)) are alpha N-terminal domain (alpha-NTD). The segment at 249-329 (FDPILLRPVD…NWPPASLADN (81 aa)) is alpha C-terminal domain (alpha-CTD).

This sequence belongs to the RNA polymerase alpha chain family. In terms of assembly, homodimer. The RNAP catalytic core consists of 2 alpha, 1 beta, 1 beta' and 1 omega subunit. When a sigma factor is associated with the core the holoenzyme is formed, which can initiate transcription.

It carries out the reaction RNA(n) + a ribonucleoside 5'-triphosphate = RNA(n+1) + diphosphate. Its function is as follows. DNA-dependent RNA polymerase catalyzes the transcription of DNA into RNA using the four ribonucleoside triphosphates as substrates. This is DNA-directed RNA polymerase subunit alpha from Tolumonas auensis (strain DSM 9187 / NBRC 110442 / TA 4).